Here is a 125-residue protein sequence, read N- to C-terminus: MGFWKFPPFLVLSILVLYQAGMFHAAPFRSVFDGRFDPATLDEEESRLLLAAMVNDYEQMRARESEKAQKTEGSRIQKRACNTATCMTHRLAGWLSRSGSMVRSNLLPTKMGFKIFSGPRKNFWF.

The N-terminal stretch at 1 to 25 (MGFWKFPPFLVLSILVLYQAGMFHA) is a signal peptide. Positions 26–77 (APFRSVFDGRFDPATLDEEESRLLLAAMVNDYEQMRARESEKAQKTEGSRIQ) are excised as a propeptide. Residues C81 and C86 are joined by a disulfide bond.

This sequence belongs to the calcitonin family.

It is found in the secreted. Stimulates cAMP production in porcine kidney cell line LLC-PK1 via the calcitonin receptor (CT) but not via the CT-like (CL) receptor. This is Calcitonin receptor-stimulating peptide 1 (CRSP1) from Capra hircus (Goat).